The following is a 348-amino-acid chain: sn-glycerol-3-phosphate import ATP-binding protein UgpC (348 aa).

The 232-residue stretch at 4-235 (IQLSNIKKQY…PETTFVADFI (232 aa)) folds into the ABC transporter domain. Residue 37–44 (GPSGCGKS) coordinates ATP.

Belongs to the ABC transporter superfamily. sn-glycerol-3-phosphate importer (TC 3.A.1.1.3) family. As to quaternary structure, the complex is composed of two ATP-binding proteins (UgpC), two transmembrane proteins (UgpA and UgpE) and a solute-binding protein (UgpB).

It is found in the cell inner membrane. It catalyses the reaction sn-glycerol 3-phosphate(out) + ATP + H2O = sn-glycerol 3-phosphate(in) + ADP + phosphate + H(+). Functionally, part of the ABC transporter complex UgpBAEC involved in sn-glycerol-3-phosphate (G3P) import. Responsible for energy coupling to the transport system. This chain is sn-glycerol-3-phosphate import ATP-binding protein UgpC, found in Bartonella quintana (strain Toulouse) (Rochalimaea quintana).